The chain runs to 540 residues: Aquaporin-5 (540 aa).

Residues 1–224 form a disordered region; sequence MSGEGTDLPT…ESIDGYNYES (224 aa). Residues 1–263 lie on the Cytoplasmic side of the membrane; sequence MSGEGTDLPT…QWMNSNFKNH (263 aa). Positions 25–44 are enriched in polar residues; that stretch reads PGSSQQQLVPIAHTISSPSK. Composition is skewed to basic and acidic residues over residues 119–133, 140–155, 174–194, and 204–214; these read RARE…EREN, RARD…ERSR, YFDD…KGMR, and SGEKVRRKSTD. Residues 264–284 traverse the membrane as a helical segment; sequence FVATIGEFVGTTMFLFFAFAG. Residues 285 to 308 lie on the Extracellular side of the membrane; sequence TQVANIDSNTVNTTTGAATGFNIA. N-linked (GlcNAc...) asparagine glycosylation occurs at Asn296. The chain crosses the membrane as a helical span at residues 309–329; it reads VQLYIAVIFGFSLMVNVWIFF. Residues 330-332 are Cytoplasmic-facing; that stretch reads RIS. A helical membrane pass occupies residues 333–353; the sequence is GGLFNPAVTLGMVLVGAIPIP. Over 354 to 356 the chain is Extracellular; sequence RAA. The chain crosses the membrane as a helical span at residues 357-377; sequence CLFFAQILGGIAASGMVLGLF. At 378–393 the chain is on the cytoplasmic side; the sequence is PTTFNVRTTLGASTST. A helical membrane pass occupies residues 394 to 414; sequence VQGVFIEAILTAELVFTIFML. The Extracellular portion of the chain corresponds to 415 to 420; the sequence is AKEKHK. The helical transmembrane segment at 421–441 threads the bilayer; the sequence is ATFIAPVGIGLALFIAEMVGV. The Cytoplasmic portion of the chain corresponds to 442 to 467; sequence YYTGGSLNPARSFGPCVVSGSFDKEH. A helical transmembrane segment spans residues 468 to 488; that stretch reads WIYWIGPITGTFIAVFFYKFI. Over 489–540 the chain is Extracellular; sequence KMLEYEMANPGQDGDAKNDPTQNEKKREQILEERNRRYEKRNGSLRPGSRLS. The disordered stretch occupies residues 499-540; that stretch reads GQDGDAKNDPTQNEKKREQILEERNRRYEKRNGSLRPGSRLS. Basic and acidic residues predominate over residues 502-530; sequence GDAKNDPTQNEKKREQILEERNRRYEKRN. Asn530 carries an N-linked (GlcNAc...) asparagine glycan.

This sequence belongs to the MIP/aquaporin (TC 1.A.8) family.

The protein localises to the membrane. The enzyme catalyses H2O(in) = H2O(out). Its function is as follows. Water channel required to facilitate the transport of water across membranes. May play a role in the vegetative growth. This Botryotinia fuckeliana (strain B05.10) (Noble rot fungus) protein is Aquaporin-5.